Reading from the N-terminus, the 457-residue chain is Multidrug resistance protein MdtK (457 aa).

A run of 12 helical transmembrane segments spans residues 11-31 (LLAL…MGVV), 53-73 (IWLP…PIVA), 93-113 (WLAT…RFII), 127-147 (AIGF…YQVL), 160-180 (GMII…AFIY), 188-208 (LGGI…FLMM), 243-263 (LPVG…ALLV), 276-296 (IALN…IAAT), 316-336 (ITAL…SIIF), 357-377 (LMLF…GSGV), 387-407 (IFFI…YLLG), and 416-436 (MGPA…AIMM).

The protein belongs to the multi antimicrobial extrusion (MATE) (TC 2.A.66.1) family. MdtK subfamily.

Its subcellular location is the cell inner membrane. Functionally, multidrug efflux pump that functions probably as a Na(+)/drug antiporter. This is Multidrug resistance protein MdtK from Proteus mirabilis (strain HI4320).